The primary structure comprises 21 residues: Large ribosomal subunit protein uL10 (21 aa).

The protein belongs to the universal ribosomal protein uL10 family. Part of the ribosomal stalk of the 50S ribosomal subunit. The N-terminus interacts with L11 and the large rRNA to form the base of the stalk. The C-terminus forms an elongated spine to which L12 dimers bind in a sequential fashion forming a multimeric L10(L12)X complex.

Forms part of the ribosomal stalk, playing a central role in the interaction of the ribosome with GTP-bound translation factors. The polypeptide is Large ribosomal subunit protein uL10 (rplJ) (Proteus vulgaris).